A 224-amino-acid polypeptide reads, in one-letter code: 7-cyano-7-deazaguanine synthase (224 aa).

Residue 9–19 (ISGGMDSTLCA) coordinates ATP. Residues Cys-190, Cys-198, Cys-201, and Cys-204 each coordinate Zn(2+).

The protein belongs to the QueC family. The cofactor is Zn(2+).

It carries out the reaction 7-carboxy-7-deazaguanine + NH4(+) + ATP = 7-cyano-7-deazaguanine + ADP + phosphate + H2O + H(+). The protein operates within purine metabolism; 7-cyano-7-deazaguanine biosynthesis. Catalyzes the ATP-dependent conversion of 7-carboxy-7-deazaguanine (CDG) to 7-cyano-7-deazaguanine (preQ(0)). The sequence is that of 7-cyano-7-deazaguanine synthase from Campylobacter jejuni subsp. doylei (strain ATCC BAA-1458 / RM4099 / 269.97).